The sequence spans 126 residues: Fluoride-specific ion channel FluC (126 aa).

The next 4 helical transmembrane spans lie at 3-23 (PLGF…RWGL), 36-56 (YGTL…VGFF), 68-88 (LLAI…SSEA), and 99-119 (WALL…ALGL). Na(+)-binding residues include G76 and T79.

Belongs to the fluoride channel Fluc/FEX (TC 1.A.43) family.

Its subcellular location is the cell inner membrane. It carries out the reaction fluoride(in) = fluoride(out). With respect to regulation, na(+) is not transported, but it plays an essential structural role and its presence is essential for fluoride channel function. Fluoride-specific ion channel. Important for reducing fluoride concentration in the cell, thus reducing its toxicity. This is Fluoride-specific ion channel FluC from Cupriavidus pinatubonensis (strain JMP 134 / LMG 1197) (Cupriavidus necator (strain JMP 134)).